Reading from the N-terminus, the 61-residue chain is Alpha-conotoxine-like Am1.3 (61 aa).

An N-terminal signal peptide occupies residues 1–21 (MGMRMMFTVFLLVVLATTVVS). Positions 22–44 (FMSGRASHGRNAAASDLIALTIK) are excised as a propeptide. Cysteine 60 bears the Cysteine amide mark.

It belongs to the conotoxin A superfamily. In terms of processing, is not hydroxylated. Post-translationally, contains 2 disulfide bonds. Expressed by the venom duct.

It is found in the secreted. Functionally, alpha-conotoxins act on postsynaptic membranes, they bind to the nicotinic acetylcholine receptors (nAChR) and thus inhibit them. The sequence is that of Alpha-conotoxine-like Am1.3 from Conus amadis (Amadis cone).